A 571-amino-acid polypeptide reads, in one-letter code: Asparagine--tRNA ligase, cytoplasmic 3 (571 aa).

G2 is subject to N-acetylglycine. Residues 50-128 (VRIGGWVKTG…QSIELSVETV (79 aa)) constitute a DNA-binding region (OB). Residues 233–289 (DVEAARLIVKERGEAVAQLKVAKASKEEITASVAQLSVAKASLAHVEERLRLKPGLP) form the WHEP-TRS domain.

The protein belongs to the class-II aminoacyl-tRNA synthetase family.

The protein localises to the cytoplasm. The protein resides in the cytosol. It catalyses the reaction tRNA(Asn) + L-asparagine + ATP = L-asparaginyl-tRNA(Asn) + AMP + diphosphate + H(+). The protein is Asparagine--tRNA ligase, cytoplasmic 3 of Arabidopsis thaliana (Mouse-ear cress).